The following is a 546-amino-acid chain: E3 ubiquitin-protein ligase NEURL1B (546 aa).

An NHR 1 domain is found at 38-194 (APRFHAQAKG…ITDEVQLLES (157 aa)). The residue at position 199 (Thr199) is a Phosphothreonine. The NHR 2 domain maps to 270–424 (ELRFHATRGP…GVAGQLRLLG (155 aa)). The segment at 429–490 (SSETMTPSGS…FSAPEPTGSR (62 aa)) is disordered. Positions 457–471 (SSSASESSLVTAPSS) are enriched in low complexity. Residues 494–534 (CTVCFDSEVDTVIYTCGHMCLCHGCGLRLRRQARACCPICR) form an RING-type zinc finger.

Interacts with DLL1 and DLL4. In terms of tissue distribution, expressed in the limb buds and dorsal root ganglia. Expressed in brain and kidney and at low levels in the heart.

The protein resides in the cytoplasm. The enzyme catalyses S-ubiquitinyl-[E2 ubiquitin-conjugating enzyme]-L-cysteine + [acceptor protein]-L-lysine = [E2 ubiquitin-conjugating enzyme]-L-cysteine + N(6)-ubiquitinyl-[acceptor protein]-L-lysine.. Its pathway is protein modification; protein ubiquitination. Functionally, E3 ubiquitin-protein ligase involved in regulation of the Notch pathway through influencing the stability and activity of several Notch ligands. The sequence is that of E3 ubiquitin-protein ligase NEURL1B (Neurl1b) from Mus musculus (Mouse).